The following is a 467-amino-acid chain: UDP-N-acetylmuramate--L-alanine ligase (467 aa).

112 to 118 contributes to the ATP binding site; that stretch reads GTHGKTT.

The protein belongs to the MurCDEF family.

Its subcellular location is the cytoplasm. The enzyme catalyses UDP-N-acetyl-alpha-D-muramate + L-alanine + ATP = UDP-N-acetyl-alpha-D-muramoyl-L-alanine + ADP + phosphate + H(+). The protein operates within cell wall biogenesis; peptidoglycan biosynthesis. In terms of biological role, cell wall formation. In Paraburkholderia xenovorans (strain LB400), this protein is UDP-N-acetylmuramate--L-alanine ligase.